Reading from the N-terminus, the 630-residue chain is A disintegrin and metalloproteinase with thrombospondin motifs 4 (630 aa).

The propeptide occupies 1 to 5; it reads RRTKR. The Peptidase M12B domain occupies 11-221; sequence RFVETLVVAD…GYGHCLLDKP (211 aa). 11 disulfide bridges follow: Cys86–Cys138, Cys115–Cys120, Cys132–Cys216, Cys170–Cys200, Cys242–Cys265, Cys253–Cys275, Cys260–Cys294, Cys288–Cys299, Cys325–Cys362, Cys329–Cys367, and Cys340–Cys352. Asn96 carries an N-linked (GlcNAc...) asparagine glycan. Residue His154 participates in Zn(2+) binding. The active site involves Glu155. His158 and His164 together coordinate Zn(2+). In terms of domain architecture, Disintegrin spans 233-303; it reads GKDYDADRQC…CMGGRCLHVD (71 aa). One can recognise a TSP type-1 domain in the interval 313-368; that stretch reads AGGWGPWGPWGDCSRTCGGGVQFSSRDCTKPVPRNGGKYCEGRRTPFRSCNTKNCP. N-linked (GlcNAc...) asparagine glycosylation is present at Asn474. The tract at residues 479–630 is spacer; that stretch reads SKQSGSFKKF…LRKRTWAGRK (152 aa).

In terms of assembly, interacts with SRPX2. Requires Zn(2+) as cofactor. Post-translationally, the precursor is cleaved by a furin endopeptidase. In terms of processing, glycosylated. Can be O-fucosylated by POFUT2 on a serine or a threonine residue found within the consensus sequence C1-X(2)-(S/T)-C2-G of the TSP type-1 repeat domains where C1 and C2 are the first and second cysteine residue of the repeat, respectively. Fucosylated repeats can then be further glycosylated by the addition of a beta-1,3-glucose residue by the glucosyltransferase, B3GALTL. Fucosylation mediates the efficient secretion of ADAMTS family members. Can also be C-glycosylated with one or two mannose molecules on tryptophan residues within the consensus sequence W-X-X-W of the TPRs, and N-glycosylated. These other glycosylations can also facilitate secretion. In terms of tissue distribution, brain specific.

The protein resides in the secreted. It is found in the extracellular space. The protein localises to the extracellular matrix. The enzyme catalyses Glutamyl endopeptidase. Bonds cleaved include 370-Thr-Glu-Gly-Glu-|-Ala-Arg-Gly-Ser-377 in the interglobular domain of mammalian aggrecan.. Its function is as follows. Cleaves aggrecan, a cartilage proteoglycan, at the '392-Glu-|-Ala-393' site and may be involved in its turnover. Also cleaves COMP. May play an important role in the destruction of aggrecan in arthritic diseases. The sequence is that of A disintegrin and metalloproteinase with thrombospondin motifs 4 (Adamts4) from Rattus norvegicus (Rat).